The primary structure comprises 448 residues: Trigger factor (448 aa).

A PPIase FKBP-type domain is found at 172–257 (GDRVTVDFVG…MKKIEWPHLP (86 aa)).

Belongs to the FKBP-type PPIase family. Tig subfamily.

It is found in the cytoplasm. The catalysed reaction is [protein]-peptidylproline (omega=180) = [protein]-peptidylproline (omega=0). Functionally, involved in protein export. Acts as a chaperone by maintaining the newly synthesized protein in an open conformation. Functions as a peptidyl-prolyl cis-trans isomerase. This Burkholderia cenocepacia (strain ATCC BAA-245 / DSM 16553 / LMG 16656 / NCTC 13227 / J2315 / CF5610) (Burkholderia cepacia (strain J2315)) protein is Trigger factor.